Reading from the N-terminus, the 153-residue chain is Fucose mutarotase (153 aa).

The Proton donor role is filled by histidine 24. Aspartate 32 lines the substrate pocket. The active site involves aspartate 69. Substrate-binding residues include methionine 79, tyrosine 120, tyrosine 138, and asparagine 140. Tyrosine 120 is a catalytic residue.

Belongs to the RbsD / FucU family. In terms of assembly, mainly homodimer, but also exists as homotetramer, homooctamer, and homodecamer. The homodimeric form seems catalytically inactive. Widely expressed in various tissues and cell lines, including kidney, liver, and pancreas, marginally in muscle and testis.

It carries out the reaction alpha-L-fucose = beta-L-fucose. It participates in carbohydrate metabolism; L-fucose metabolism. In terms of biological role, involved in the interconversion between alpha- and beta-L-fucoses. L-Fucose (6-deoxy-L-galactose) exists as alpha-L-fucose (29.5%) and beta-L-fucose (70.5%), the beta-form is metabolized through the salvage pathway. GDP-L-fucose formed either by the de novo or salvage pathways is transported into the endoplasmic reticulum, where it serves as a substrate for N- and O-glycosylations by fucosyltransferases. Fucosylated structures expressed on cell surfaces or secreted in biological fluids are believed to play a critical role in cell-cell adhesion and recognition processes. The chain is Fucose mutarotase (Fuom) from Mus musculus (Mouse).